Reading from the N-terminus, the 419-residue chain is MERRYLKNPFPDFAGGENTPFASDEEHIKNLICTYVDAILEHCHPNSDDEDNRGDLYVGNAGIAFMFWKLNSCEQTRDLYPALDHAASFIRNAKVNANRYKKRSAERYSFLCGNAGIYAVSAAISQALKETEELSDDLANFKSGIPCSKEFMHTKYGCDEVLVGRAGYLSGCYWLNDVLPEKKITDDDLVSICQLIVTSGREYSKQNNSPCPLMYQYHGTEYLGAAHGLCAILHMLLDSPWFRTLPISAPAAELRDIKRSIDFFLELQDSDGNFPVALEDLRSGRDKRLVHWCHGAPGAVYVLAKAYLIFKEEKYLASLRRCADMVWKKGFLRKGPGICHGVAGNGYVFLLLFRLTNEMRYLYRAHKFMELLTNAEFKLRARTPDRPHSLYEGVAGTVCYLVDLLEPEQAYFPFMDVFH.

The protein belongs to the LanC-like protein family.

The chain is LanC-like protein 3 homolog from Drosophila melanogaster (Fruit fly).